The following is a 370-amino-acid chain: MAITLEEAPWLGWLLVKALMRFAFMVVNNLVAIPSYICYVIILQPLRVLDSKRFWYIEGIMYKWLLGMVASWGWYAGYTVMEWGEDIKAVSKDEAVMLVNHQATGDVCTLMMCLQDKGLVVAQMMWLMDHIFKYTNFGIVSLVHGDFFIRQGRSYRDQQLLLLKKHLENNYRSRDRKWIVLFPEGGFLRKRRETSQAFAKKNNLPFLTNVTLPRSGATKIILNALVAQQKNGSPAGGDAKELDSKSKGLQWIIDTTIAYPKAEPIDIQTWILGYRKPTVTHVHYRIFPIKDVPLETDDLTTWLYQRFVEKEDLLSHFYETGAFPPSKGHKEAVSREMTLSNLWIFLIQSFAFLSGYMWYNIIQYFYHCLF.

Residues 22 to 42 (FAFMVVNNLVAIPSYICYVII) form a helical membrane-spanning segment. Residues 101–106 (HQATGD) carry the HXXXXD motif motif. Residues 342 to 362 (LWIFLIQSFAFLSGYMWYNII) form a helical membrane-spanning segment.

The protein belongs to the 1-acyl-sn-glycerol-3-phosphate acyltransferase family. Highly expressed in liver and placenta. Also expressed in peripheral blood, lung, kidney and brain. Detected at lower levels in colon. High expression is detected in brain and testis.

Its subcellular location is the endoplasmic reticulum membrane. It catalyses the reaction a 2-acyl-sn-glycero-3-phosphoethanolamine + octadecanoyl-CoA = 1-octadecanoyl-2-acyl-sn-glycero-3-phosphoethanolamine + CoA. The enzyme catalyses 2-(9Z-octadecenoyl)-sn-glycero-3-phosphoethanolamine + octadecanoyl-CoA = 1-octadecanoyl-2-(9Z-octadecenoyl)-sn-glycero-3-phosphoethanolamine + CoA. It carries out the reaction a 2-acyl-sn-glycero-3-phosphoethanolamine + hexadecanoyl-CoA = 1-hexadecanoyl-2-acyl-sn-glycero-3-phosphoethanolamine + CoA. The catalysed reaction is 2-(9Z-octadecenoyl)-sn-glycero-3-phosphoethanolamine + hexadecanoyl-CoA = 1-hexadecanoyl-2-(9Z-octadecenoyl)-sn-glycero-3-phosphoethanolamine + CoA. It catalyses the reaction 1-tetradecanoyl-sn-glycero-3-phospho-(1'-sn-glycerol) + hexadecanoyl-CoA = 1-tetradecanoyl-2-hexadecanoyl-sn-glycero-3-phospho-(1'-sn-glycerol) + CoA. The enzyme catalyses 1-hexadecanoyl-sn-glycero-3-phospho-(1'-sn-glycerol) + dodecanoyl-CoA = 1-hexadecanoyl-2-dodecanoyl-sn-glycero-3-phospho-(1'-sn-glycerol) + CoA. It carries out the reaction 1-hexadecanoyl-sn-glycero-3-phospho-(1'-sn-glycerol) + hexadecanoyl-CoA = 1,2-dihexadecanoyl-sn-glycero-3-phospho-(1'-sn-glycerol) + CoA. The catalysed reaction is 1-hexadecanoyl-sn-glycero-3-phospho-(1'-sn-glycerol) + octadecanoyl-CoA = 1-hexadecanoyl-2-octadecanoyl-sn-glycero-3-phospho-(1'-sn-glycerol) + CoA. It catalyses the reaction 1-octadecanoyl-sn-glycero-3-phospho-(1'-sn-glycerol) + hexadecanoyl-CoA = 1-octadecanoyl-2-hexadecanoyl-sn-glycero-3-phospho-(1'-sn-glycerol) + CoA. The enzyme catalyses 1-(9Z-octadecenoyl)-sn-glycero-3-phospho-(1'-sn-glycerol) + dodecanoyl-CoA = 1-(9Z-octadecenoyl)-2-dodecanoyl-sn-glycero-3-phospho-(1'-sn-glycerol) + CoA. It carries out the reaction 1-hexadecanoyl-sn-glycero-3-phospho-(1'-sn-glycerol) + (9Z)-octadecenoyl-CoA = 1-hexadecanoyl-2-(9Z-octadecenoyl)-sn-glycero-3-phospho-(1'-sn-glycerol) + CoA. The catalysed reaction is 1-(9Z-octadecenoyl)-sn-glycero-3-phospho-(1'-sn-glycerol) + hexadecanoyl-CoA = 1-(9Z-octadecenoyl)-2-hexadecanoyl-sn-glycero-3-phospho-(1'-sn-glycerol) + CoA. It catalyses the reaction 1-(9Z-octadecenoyl)-sn-glycero-3-phospho-(1'-sn-glycerol) + (9Z)-octadecenoyl-CoA = 1,2-di-(9Z-octadecenoyl)-sn-glycero-3-phospho-(1'-sn-glycerol) + CoA. The enzyme catalyses a 2-acylglycerol + an acyl-CoA = a 1,2-diacylglycerol + CoA. It carries out the reaction a 2-acylglycerol + hexadecanoyl-CoA = a 1-hexadecanoyl-2-acylglycerol + CoA. The catalysed reaction is a 1-acylglycerol + hexadecanoyl-CoA = an hexadecanoyl-acylglycerol + CoA. It catalyses the reaction a 2-acyl-sn-glycero-3-phosphocholine + an acyl-CoA = a 1,2-diacyl-sn-glycero-3-phosphocholine + CoA. The enzyme catalyses 2-(9Z-octadecenoyl)-sn-glycero-3-phosphocholine + octadecanoyl-CoA = 1-octadecanoyl-2-(9Z-octadecenoyl)-sn-glycero-3-phosphocholine + CoA. It carries out the reaction 2-(9Z,12Z-octadecadienoyl)-sn-glycero-3-phosphocholine + octadecanoyl-CoA = 1-octadecanoyl-2-(9Z,12Z)-octadecadienoyl-sn-glycero-3-phosphocholine + CoA. The catalysed reaction is 2-(5Z,8Z,11Z,14Z)-eicosatetraenoyl-sn-glycero-3-phosphocholine + octadecanoyl-CoA = 1-octadecanoyl-2-(5Z,8Z,11Z,14Z-eicosatetraenoyl)-sn-glycero-3-phosphocholine + CoA. It catalyses the reaction 2-(9Z-octadecenoyl)-sn-glycero-3-phosphocholine + hexadecanoyl-CoA = 1-hexadecanoyl-2-(9Z-octadecenoyl)-sn-glycero-3-phosphocholine + CoA. The enzyme catalyses 2-(9Z-octadecenoyl)-sn-glycero-3-phospho-L-serine + hexadecanoyl-CoA = 1-hexadecanoyl-2-(9Z-octadecenoyl)-sn-glycero-3-phospho-L-serine + CoA. It carries out the reaction 2-(4Z,7Z,10Z,13Z,16Z,19Z-docosahexaenoyl)-sn-glycero-3-phosphocholine + octadecanoyl-CoA = 1-octadecanoyl-2-(4Z,7Z,10Z,13Z,16Z,19Z-docosahexaenoyl)-sn-glycero-3-phosphocholine + CoA. The catalysed reaction is 1-(9Z-octadecenoyl)-sn-glycero-3-phospho-L-serine + octadecanoyl-CoA = 1-(9Z-octadecenoyl)-2-octadecanoyl-sn-glycero-3-phospho-L-serine + CoA. It catalyses the reaction a 2-acyl-sn-glycero-3-phosphoethanolamine + a fatty acyl-CoA = a 1,2-diacyl-sn-glycero-3-phosphoethanolamine + CoA. Its function is as follows. Lysophospholipid acyltransferase involved in fatty acyl chain remodeling of glycerophospholipids in the endoplasmic reticulum membrane. Selectively catalyzes the transfer and esterification of saturated long-chain fatty acids from acyl-CoA to the sn-1 position of 1-lyso-2-acyl phosphatidylethanolamines (1-lyso-PE, LPE), with a preference for stearoyl CoA over palmitoyl CoA as acyl donor. Acts in concert with an unknown phospholipase A1 to convert palmitate phosphatidylethanolamine (PE) species into stearate ones. Provides substrates to the PE methylation pathway, controlling stearate/palmitate composition of PE and phosphatidylcholine (PC) species with an overall impact on de novo hepatic lipid synthesis, body fat content and life span. Can acylate lysophosphatidylglycerols (LPG) using various saturated fatty acyl-CoAs as acyl donors. Can also acylate monoacylglycerols with a preference for 2-monoacylglycerols over 1-monoacylglycerols. Has no activity toward lysophosphatidic acids (LPA). This is Acyl-CoA:lysophosphatidylglycerol acyltransferase 1 from Homo sapiens (Human).